The primary structure comprises 556 residues: Genetic interactor of prohibitins 3, mitochondrial (556 aa).

The transit peptide at 1–21 (MLNLCHALRGVRQFSCSVIVK) directs the protein to the mitochondrion. The 193-residue stretch at 113-305 (ESTLNDILNY…LFDLPGYSTS (193 aa)) folds into the CP-type G domain.

It belongs to the TRAFAC class YlqF/YawG GTPase family. GEP3 subfamily.

It localises to the mitochondrion. Its function is as follows. Interacts genetically with prohibitins and thus may be involved in the mitochondrial lipid metabolism. This is Genetic interactor of prohibitins 3, mitochondrial (GEP3) from Saccharomyces cerevisiae (strain Zymaflore VL3) (Baker's yeast).